The chain runs to 228 residues: Cytokinin riboside 5'-monophosphate phosphoribohydrolase LOG5 (228 aa).

Substrate-binding positions include Glu79, 97 to 98, and 114 to 120; these read RK and GYGTLEE.

Belongs to the LOG family. Expressed in roots and shoots. Detected in vascular tissues of roots, cotyledons, and leaves, axillary buds, immature and mature flowers, fruit abscission zones and ovules.

The protein localises to the cytoplasm. Its subcellular location is the nucleus. The catalysed reaction is N(6)-(dimethylallyl)adenosine 5'-phosphate + H2O = N(6)-dimethylallyladenine + D-ribose 5-phosphate. The enzyme catalyses 9-ribosyl-trans-zeatin 5'-phosphate + H2O = trans-zeatin + D-ribose 5-phosphate. Functionally, cytokinin-activating enzyme working in the direct activation pathway. Phosphoribohydrolase that converts inactive cytokinin nucleotides to the biologically active free-base forms. The protein is Cytokinin riboside 5'-monophosphate phosphoribohydrolase LOG5 (LOG5) of Arabidopsis thaliana (Mouse-ear cress).